The following is a 287-amino-acid chain: Bifunctional protein FolD (287 aa).

NADP(+)-binding positions include 165 to 167 (GRS), Ser-190, and Ile-231.

It belongs to the tetrahydrofolate dehydrogenase/cyclohydrolase family. In terms of assembly, homodimer.

It catalyses the reaction (6R)-5,10-methylene-5,6,7,8-tetrahydrofolate + NADP(+) = (6R)-5,10-methenyltetrahydrofolate + NADPH. The enzyme catalyses (6R)-5,10-methenyltetrahydrofolate + H2O = (6R)-10-formyltetrahydrofolate + H(+). Its pathway is one-carbon metabolism; tetrahydrofolate interconversion. Functionally, catalyzes the oxidation of 5,10-methylenetetrahydrofolate to 5,10-methenyltetrahydrofolate and then the hydrolysis of 5,10-methenyltetrahydrofolate to 10-formyltetrahydrofolate. This is Bifunctional protein FolD from Trichodesmium erythraeum (strain IMS101).